A 148-amino-acid polypeptide reads, in one-letter code: Large ribosomal subunit protein bL9 (148 aa).

Belongs to the bacterial ribosomal protein bL9 family.

Its function is as follows. Binds to the 23S rRNA. This Methylococcus capsulatus (strain ATCC 33009 / NCIMB 11132 / Bath) protein is Large ribosomal subunit protein bL9.